The sequence spans 950 residues: Leucine--tRNA ligase (950 aa).

The short motif at 41–52 (PYPSGDGLHVGH) is the 'HIGH' region element. The 'KMSKS' region signature appears at 718–722 (KMSKS). Residue lysine 721 coordinates ATP.

The protein belongs to the class-I aminoacyl-tRNA synthetase family.

It localises to the cytoplasm. The enzyme catalyses tRNA(Leu) + L-leucine + ATP = L-leucyl-tRNA(Leu) + AMP + diphosphate. In Rhodopirellula baltica (strain DSM 10527 / NCIMB 13988 / SH1), this protein is Leucine--tRNA ligase.